The sequence spans 606 residues: NADH-ubiquinone oxidoreductase chain 5 (606 aa).

16 helical membrane-spanning segments follow: residues Phe4–Phe24, Ala43–Ile63, Phe84–Ser104, Ile114–Ala134, Leu140–Gly160, Ala171–Ile191, Leu213–Leu233, Thr241–Ile261, Phe272–Ala292, Ile301–Asn320, Ala325–Ile347, Met366–Leu386, Leu413–Gly433, Leu457–Ile477, Tyr485–Ser505, and Gly582–Leu602.

Belongs to the complex I subunit 5 family. In terms of assembly, core subunit of respiratory chain NADH dehydrogenase (Complex I) which is composed of 45 different subunits.

The protein localises to the mitochondrion inner membrane. It catalyses the reaction a ubiquinone + NADH + 5 H(+)(in) = a ubiquinol + NAD(+) + 4 H(+)(out). Core subunit of the mitochondrial membrane respiratory chain NADH dehydrogenase (Complex I) which catalyzes electron transfer from NADH through the respiratory chain, using ubiquinone as an electron acceptor. Essential for the catalytic activity and assembly of complex I. This Ovis aries (Sheep) protein is NADH-ubiquinone oxidoreductase chain 5 (MT-ND5).